The chain runs to 782 residues: Cadherin-5 (782 aa).

The N-terminal stretch at 1–22 (MQVLVMLLAAAGTYLGLLTAPT) is a signal peptide. A propeptide spanning residues 23–44 (AASNPGRQDTPSTLPLHRRQKR) is cleaved from the precursor. Cadherin domains lie at 45 to 148 (DWIW…WPVF), 149 to 255 (TQLV…FPVF), 256 to 370 (TQTR…PPNF), 371 to 475 (KQPF…DNAP), and 476 to 592 (EFAK…MGAQ). Over 45 to 598 (DWIWNQMHID…MGAQVGVSIQ (554 aa)) the chain is Extracellular. Glu-55 and Glu-56 together coordinate Ca(2+). Residue Asn-58 is glycosylated (N-linked (GlcNAc...) asparagine). Ca(2+)-binding residues include Asp-106, Glu-108, Asp-140, Ile-141, Asn-142, Asp-143, and Asn-144. Asn-154 carries an N-linked (GlcNAc...) asparagine glycan. Positions 174, 176, 183, and 228 each coordinate Ca(2+). Residues Asn-360, Asn-440, Asn-522, and Asn-534 are each glycosylated (N-linked (GlcNAc...) asparagine). The chain crosses the membrane as a helical span at residues 599–619 (ALVAIFLCILTIAVISLLVYL). The interval 620-659 (RRRLRKQARAHGKSVPEIHEQLVTYDEEGGGEMDTTSYDV) is required for interaction with PALS1. The Cytoplasmic segment spans residues 620 to 782 (RRRLRKQARA…GSDPREELLY (163 aa)).

In terms of assembly, part of a complex composed of AMOTL2, MAGI1 and CDH5, within the complex AMOTL2 acts as a scaffold protein for the interaction of MAGI1 with CDH5. The complex is required for coupling actin fibers to cell junctions in endothelial cells. Within the complex AMOTL2 (via its N-terminus) interacts with CDH5. Interacts (via cadherin 5 domain) with PTPRB. Interacts with TRPC4. Interacts with KRIT1. Interacts with PARD3. Interacts with RTN4 (isoform B). Interacts with PALS1; the interaction promotes PALS1 localization to cell junctions and is required for CDH5-mediated vascular lumen formation and endothelial cell. Interacts with CTNND1/p120-catenin; the interaction controls CADH5 endocytosis. In terms of processing, phosphorylated on tyrosine residues by KDR/VEGFR-2. Dephosphorylated by PTPRB. Post-translationally, O-glycosylated.

The protein resides in the cell junction. It localises to the adherens junction. Its subcellular location is the cell membrane. It is found in the cytoplasm. In terms of biological role, cadherins are calcium-dependent cell adhesion proteins. They preferentially interact with themselves in a homophilic manner in connecting cells; cadherins may thus contribute to the sorting of heterogeneous cell types. This cadherin may play a important role in endothelial cell biology through control of the cohesion and organization of the intercellular junctions. It associates with alpha-catenin forming a link to the cytoskeleton. Plays a role in coupling actin fibers to cell junctions in endothelial cells, via acting as a cell junctional complex anchor for AMOTL2 and MAGI1. Acts in concert with KRIT1 and PALS1 to establish and maintain correct endothelial cell polarity and vascular lumen. These effects are mediated by recruitment and activation of the Par polarity complex and RAP1B. Required for activation of PRKCZ and for localization of phosphorylated PRKCZ, PARD3, TIAM1 and RAP1B to the cell junction. Associates with CTNND1/p120-catenin to control CADH5 endocytosis. The chain is Cadherin-5 from Sus scrofa (Pig).